A 96-amino-acid polypeptide reads, in one-letter code: Large ribosomal subunit protein uL23 (96 aa).

Belongs to the universal ribosomal protein uL23 family. Part of the 50S ribosomal subunit. Contacts protein L29, and trigger factor when it is bound to the ribosome.

In terms of biological role, one of the early assembly proteins it binds 23S rRNA. One of the proteins that surrounds the polypeptide exit tunnel on the outside of the ribosome. Forms the main docking site for trigger factor binding to the ribosome. The polypeptide is Large ribosomal subunit protein uL23 (Desulfovibrio desulfuricans (strain ATCC 27774 / DSM 6949 / MB)).